The primary structure comprises 948 residues: Phosphatidylinositol-glycan-specific phospholipase D (948 aa).

Positions 1–24 are cleaved as a signal peptide; it reads MKNKIILLWLLLIVILCTISNVKG. Asparagine 39, asparagine 78, asparagine 148, asparagine 300, asparagine 433, asparagine 452, asparagine 506, and asparagine 535 each carry an N-linked (GlcNAc...) asparagine glycan. FG-GAP repeat units follow at residues 451–512, 526–588, 596–656, and 663–724; these read TNFT…SVTI, QVAT…NPAG, LPSI…RISG, and DADY…LNSF. 2 N-linked (GlcNAc...) asparagine glycosylation sites follow: asparagine 749 and asparagine 788. 2 FG-GAP repeats span residues 799-861 and 895-948; these read NLLL…LTND and SSGG…NIFQ.

This sequence belongs to the GPLD1 family. Ca(2+) serves as cofactor.

It is found in the secreted. The catalysed reaction is a 6-(alpha-D-glucosaminyl)-1-(1,2-diacyl-sn-glycero-3-phospho)-1D-myo-inositol + H2O = 6-(alpha-D-glucosaminyl)-1D-myo-inositol + a 1,2-diacyl-sn-glycero-3-phosphate + H(+). Its function is as follows. Hydrolyzes the inositol phosphate linkage in proteins anchored by phosphatidylinositol glycans (GPI-anchor) thus releasing these proteins from the membrane. May also cleave GPI anchor intermediates intracellularly. This is Phosphatidylinositol-glycan-specific phospholipase D (pldG) from Dictyostelium discoideum (Social amoeba).